The primary structure comprises 579 residues: Nuclear receptor subfamily 1 group D member 2 (579 aa).

The segment at 1 to 60 (MEVNAGGVIAYISSSSSASSPASCHSEGSENSFQSSSSSVPSSPNSSNSDTNGNPKNGDL) is required for phosphorylation by CSNK1E and cytoplasmic localization. Residues 1–99 (MEVNAGGVIA…HSGVTKFSGM (99 aa)) form a modulating region. Residues 13-54 (SSSSSASSPASCHSEGSENSFQSSSSSVPSSPNSSNSDTNGN) show a composition bias toward low complexity. Positions 13 to 61 (SSSSSASSPASCHSEGSENSFQSSSSSVPSSPNSSNSDTNGNPKNGDLA) are disordered. Phosphoserine; by GSK3-beta is present on S46. Positions 100–176 (VLLCKVCGDV…VGMSRDAVRF (77 aa)) form a DNA-binding region, nuclear receptor. 2 NR C4-type zinc fingers span residues 103–123 (CKVC…CEGC) and 140–164 (CLKN…FKKC). Residues K162 and K163 each carry the N6-acetyllysine; by KAT5 modification. The segment at 222–250 (PAQEQLRPKPQLEQENIKSSSPPSSDFAK) is disordered. The span at 227-237 (LRPKPQLEQEN) shows a compositional bias: basic and acidic residues. Cystine bridges form between C337-C343 and C374-C384. Residues 369 to 579 (KNSYLCNTGG…EELLAFKVHP (211 aa)) enclose the NR LBD domain. Heme-binding residues include C384 and H568. Residues 397 to 579 (SGHEIWEEFS…EELLAFKVHP (183 aa)) form an interaction with ZNHIT1 region.

Belongs to the nuclear hormone receptor family. NR1 subfamily. In terms of assembly, binds DNA as a monomer or a homodimer. Interacts with NCOA5 coactivator, leading to a strong increase of transcription of target genes. Interacts (via N-terminus) with KAT5. Interacts (via C-terminus) with HDAC1. Interacts with ZNHIT1. Interacts with SIAH2. Post-translationally, deacetylated by HDAC1. Acetylation and deacetylation regulate its transcriptional regulatory activity. Under more reducing intracellular redox conditions, Cys-384 is in its heme-bound state, which is optimal for recruitment of the NCOR1/HDAC3 corepressor complex and repression of target genes. When subjected to oxidative stress conditions, Cys-384 undergoes oxidation to form a disulfide bridge with Cys-374, also triggering a ligand switch that results in release of bound heme and derepression of target genes. In terms of processing, ubiquitinated by SIAH2; leading to proteasomal degradation. Post-translationally, phosphorylated by CSNK1E; phosphorylation enhances its cytoplasmic localization. In terms of tissue distribution, widely expressed. Expressed at high levels in the liver, adipose tissue, skeletal muscle and brain. Expression oscillates diurnally in the suprachiasmatic nucleus (SCN) of the hypothalamus as well as in peripheral tissues.

The protein resides in the nucleus. It is found in the cytoplasm. Its activity is regulated as follows. The heme-bound form can bind gaseous signaling molecules such as CO and nitric oxide (NO) and NO can reverse its transcriptional repressor activity. Its function is as follows. Transcriptional repressor which coordinates circadian rhythm and metabolic pathways in a heme-dependent manner. Integral component of the complex transcription machinery that governs circadian rhythmicity and forms a critical negative limb of the circadian clock by directly repressing the expression of core clock components BMAL1 and CLOCK. Also regulates genes involved in metabolic functions, including lipid metabolism and the inflammatory response. Acts as a receptor for heme which stimulates its interaction with the NCOR1/HDAC3 corepressor complex, enhancing transcriptional repression. Recognizes two classes of DNA response elements within the promoter of its target genes and can bind to DNA as either monomers or homodimers, depending on the nature of the response element. Binds as a monomer to a response element composed of the consensus half-site motif 5'-[A/G]GGTCA-3' preceded by an A/T-rich 5' sequence (RevRE), or as a homodimer to a direct repeat of the core motif spaced by two nuclegotides (RevDR-2). Acts as a potent competitive repressor of ROR alpha (RORA) function and also negatively regulates the expression of NR1D1. Regulates lipid and energy homeostasis in the skeletal muscle via repression of genes involved in lipid metabolism and myogenesis including: CD36, FABP3, FABP4, UCP3, SCD1 and MSTN. Regulates hepatic lipid metabolism via the repression of APOC3. Represses gene expression at a distance in macrophages by inhibiting the transcription of enhancer-derived RNAs (eRNAs). In addition to its activity as a repressor, can also act as a transcriptional activator. Acts as a transcriptional activator of the sterol regulatory element-binding protein 1 (SREBF1) and the inflammatory mediator interleukin-6 (IL6) in the skeletal muscle. Plays a role in the regulation of circadian sleep/wake cycle; essential for maintaining wakefulness during the dark phase or active period. Key regulator of skeletal muscle mitochondrial function; negatively regulates the skeletal muscle expression of core clock genes and genes involved in mitochondrial biogenesis, fatty acid beta-oxidation and lipid metabolism. May play a role in the circadian control of neutrophilic inflammation in the lung. This is Nuclear receptor subfamily 1 group D member 2 from Homo sapiens (Human).